Reading from the N-terminus, the 418-residue chain is UPF0261 protein BMEII0128 (418 aa).

The protein belongs to the UPF0261 family.

This Brucella melitensis biotype 1 (strain ATCC 23456 / CCUG 17765 / NCTC 10094 / 16M) protein is UPF0261 protein BMEII0128.